Consider the following 407-residue polypeptide: Peptidase T (407 aa).

Position 82 (His-82) interacts with Zn(2+). Residue Asp-84 is part of the active site. Asp-143 serves as a coordination point for Zn(2+). Glu-177 (proton acceptor) is an active-site residue. Positions 178, 200, and 382 each coordinate Zn(2+).

Belongs to the peptidase M20B family. Zn(2+) is required as a cofactor.

The protein resides in the cytoplasm. It catalyses the reaction Release of the N-terminal residue from a tripeptide.. Functionally, cleaves the N-terminal amino acid of tripeptides. This chain is Peptidase T, found in Streptococcus pyogenes serotype M3 (strain ATCC BAA-595 / MGAS315).